Reading from the N-terminus, the 441-residue chain is Probable acetylornithine aminotransferase, mitochondrial (441 aa).

K294 carries the N6-(pyridoxal phosphate)lysine modification.

Belongs to the class-III pyridoxal-phosphate-dependent aminotransferase family. It depends on pyridoxal 5'-phosphate as a cofactor.

It is found in the mitochondrion matrix. It catalyses the reaction N(2)-acetyl-L-ornithine + 2-oxoglutarate = N-acetyl-L-glutamate 5-semialdehyde + L-glutamate. It functions in the pathway amino-acid biosynthesis; L-arginine biosynthesis; N(2)-acetyl-L-ornithine from L-glutamate: step 4/4. The chain is Probable acetylornithine aminotransferase, mitochondrial (arg1) from Schizosaccharomyces pombe (strain 972 / ATCC 24843) (Fission yeast).